The primary structure comprises 358 residues: Protein-glutamate methylesterase/protein-glutamine glutaminase 1 (358 aa).

The Response regulatory domain occupies 8-125 (RVLIVDDSAV…ARGLEGYAEE (118 aa)). Asp-59 is subject to 4-aspartylphosphate. The CheB-type methylesterase domain occupies 157–352 (PVPGSALRFR…LERVAERLIA (196 aa)). Residues Ser-177, His-203, and Asp-299 contribute to the active site.

This sequence belongs to the CheB family. Phosphorylated by CheA. Phosphorylation of the N-terminal regulatory domain activates the methylesterase activity.

It is found in the cytoplasm. It carries out the reaction [protein]-L-glutamate 5-O-methyl ester + H2O = L-glutamyl-[protein] + methanol + H(+). It catalyses the reaction L-glutaminyl-[protein] + H2O = L-glutamyl-[protein] + NH4(+). Its function is as follows. Involved in chemotaxis. Part of a chemotaxis signal transduction system that modulates chemotaxis in response to various stimuli. Catalyzes the demethylation of specific methylglutamate residues introduced into the chemoreceptors (methyl-accepting chemotaxis proteins or MCP) by CheR. Also mediates the irreversible deamidation of specific glutamine residues to glutamic acid. This Xanthomonas campestris pv. campestris (strain ATCC 33913 / DSM 3586 / NCPPB 528 / LMG 568 / P 25) protein is Protein-glutamate methylesterase/protein-glutamine glutaminase 1.